Reading from the N-terminus, the 214-residue chain is MVTPHGILLLTITAAASLLWITFAEITIPNDAKSFENFLKEHGPGKPGPLGYFNSIYMAFTREEAENFPNLVSVHTRMKRIKTQNSTIPDKYVILGIQAPNDTQEQNSTRNKRDSESYTATTQSGTCSTTIGGLQRLCEVCPARTDLGPDITPRFINEVLCDVPGLDCGVGQVGGKCRSASVFQDFLRFSSSDSNLEVYSQEIRVCCECALALS.

The first 24 residues, Met-1–Ala-24, serve as a signal peptide directing secretion. A disordered region spans residues Ala-99 to Thr-121. Residues Pro-100–Thr-109 show a composition bias toward polar residues.

Component of the acid-insoluble and acid-soluble organic matrix of the aragonitic skeleton (at protein level).

The protein resides in the secreted. This is an uncharacterized protein from Acropora millepora (Staghorn coral).